Reading from the N-terminus, the 213-residue chain is Pyridoxine/pyridoxamine 5'-phosphate oxidase (213 aa).

Substrate contacts are provided by residues 9–12 (RLEY) and lysine 67. FMN is bound by residues 62 to 67 (RIVLLK), 77 to 78 (YT), arginine 83, lysine 84, and glutamine 106. Substrate contacts are provided by tyrosine 124, arginine 128, and serine 132. FMN contacts are provided by residues 141–142 (QS) and tryptophan 185. 191-193 (RLH) lines the substrate pocket. FMN is bound at residue arginine 195.

It belongs to the pyridoxamine 5'-phosphate oxidase family. Homodimer. It depends on FMN as a cofactor.

The catalysed reaction is pyridoxamine 5'-phosphate + O2 + H2O = pyridoxal 5'-phosphate + H2O2 + NH4(+). It catalyses the reaction pyridoxine 5'-phosphate + O2 = pyridoxal 5'-phosphate + H2O2. It functions in the pathway cofactor metabolism; pyridoxal 5'-phosphate salvage; pyridoxal 5'-phosphate from pyridoxamine 5'-phosphate: step 1/1. It participates in cofactor metabolism; pyridoxal 5'-phosphate salvage; pyridoxal 5'-phosphate from pyridoxine 5'-phosphate: step 1/1. In terms of biological role, catalyzes the oxidation of either pyridoxine 5'-phosphate (PNP) or pyridoxamine 5'-phosphate (PMP) into pyridoxal 5'-phosphate (PLP). In Chromobacterium violaceum (strain ATCC 12472 / DSM 30191 / JCM 1249 / CCUG 213 / NBRC 12614 / NCIMB 9131 / NCTC 9757 / MK), this protein is Pyridoxine/pyridoxamine 5'-phosphate oxidase.